We begin with the raw amino-acid sequence, 151 residues long: Ribosome maturation factor RimP (151 aa).

This sequence belongs to the RimP family.

The protein resides in the cytoplasm. In terms of biological role, required for maturation of 30S ribosomal subunits. This chain is Ribosome maturation factor RimP, found in Shewanella amazonensis (strain ATCC BAA-1098 / SB2B).